The chain runs to 150 residues: UPF0506 protein SJCHGC03144 (150 aa).

Positions 1 to 18 (MNTCIQLLILCLVTVINS) are cleaved as a signal peptide. N-linked (GlcNAc...) asparagine glycosylation is found at Asn-20, Asn-36, Asn-52, and Asn-110. Disulfide bonds link Cys-116–Cys-130, Cys-123–Cys-134, and Cys-129–Cys-139.

This sequence belongs to the UPF0506 family.

The protein resides in the secreted. In Schistosoma japonicum (Blood fluke), this protein is UPF0506 protein SJCHGC03144.